We begin with the raw amino-acid sequence, 241 residues long: MKVLIKDNYDELSEVAALEILELIDKKPDCVLGLATGSTPVGTYQKLIEYYKKGKVDFSKVTSFNLDEYRGLNGEHPQSYKFFMNNTLFNHINIDKKNTFILDGLSNDIEKECIEYDKKIDNKGGIDLQILGIGGNGHIGFNEPSEELSISTHLTKLKTKTIKDNSRFFNSEEEVPTEAITMGIGSIMKARKIILLINGEVKAEIVKKLINGNVSTKVPASLLHLHPNCTVILDKEAAKFI.

Catalysis depends on D67, which acts as the Proton acceptor; for enolization step. Residue N136 is the For ring-opening step of the active site. Residue H138 is the Proton acceptor; for ring-opening step of the active site. E143 serves as the catalytic For ring-opening step.

This sequence belongs to the glucosamine/galactosamine-6-phosphate isomerase family. NagB subfamily.

The enzyme catalyses alpha-D-glucosamine 6-phosphate + H2O = beta-D-fructose 6-phosphate + NH4(+). The protein operates within amino-sugar metabolism; N-acetylneuraminate degradation; D-fructose 6-phosphate from N-acetylneuraminate: step 5/5. Functionally, catalyzes the reversible isomerization-deamination of glucosamine 6-phosphate (GlcN6P) to form fructose 6-phosphate (Fru6P) and ammonium ion. The chain is Glucosamine-6-phosphate deaminase from Clostridium tetani (strain Massachusetts / E88).